The primary structure comprises 1061 residues: Protein pid-5 (1061 aa).

The protein belongs to the peptidase M24B family. As to quaternary structure, may interact with pid-2, app-1 and prmt-5.

It is found in the cytoplasm. The protein localises to the perinuclear region. It localises to the P-body. Together with pid-4, it is involved in gene silencing mediated by a class of 21 nucleotide PIWI-interacting RNAs (piRNAs) that possess a uracil residue at the 5'-end (also called 21U-RNAs) and guide the Piwi protein prg-1 to its DNA targets for silencing. Together with pid-4, it is required for the biogenesis of secondary and tertiary 22G-siRNAs. Specifically, promotes the production of 22G-siRNAs from the 5' end of target mRNAs. Together with pid-4, plays a role in small RNA-directed transgenerational epigenetic inheritance (also called RNAe) over several generations and germline immortality. Together with pid-4, plays a role in the formation of liquid-like condensates in the cytoplasm called Z granules. This is Protein pid-5 from Caenorhabditis elegans.